Consider the following 1558-residue polypeptide: Calmodulin-regulated spectrin-associated protein 1-B (1558 aa).

A Calponin-homology (CH) domain is found at 231-346; sequence WYWKLVPVRY…FIAELFWWFE (116 aa). Composition is skewed to polar residues over residues 400-417, 440-450, and 504-516; these read VQNS…SGFS, ACRNRSNSLTQ, and ASTV…SHPG. Disordered regions lie at residues 400-464, 504-523, 551-585, 602-675, 737-790, 803-850, and 943-968; these read VQNS…SDKR, ASTV…VRRI, NDIT…SDSR, AKEK…APGQ, TKEL…VASG, QRFG…QNKD, and DRSK…SSSP. Over residues 602 to 620 the composition is skewed to basic and acidic residues; that stretch reads AKEKSISLNKEEESGEGRQ. The span at 643 to 658 shows a compositional bias: polar residues; that stretch reads QTLNRTFTPNTSSEFE. Basic and acidic residues predominate over residues 737 to 772; sequence TKELHPDKKQHFEEEVESAKLREDMNVKEHEDKDGG. Composition is skewed to low complexity over residues 776–790 and 812–822; these read SSPG…VASG and RSSTSSSQRTT. Residues 849–887 adopt a coiled-coil conformation; sequence KDNANMLASELVQLHMQLEEKRRAIESQKKKMEILTARQ. A compositionally biased stretch (basic and acidic residues) spans 943-955; it reads DRSKEAEEPEKAS. A coiled-coil region spans residues 971-1004; that stretch reads VEEEVDLNECNRSIELLNEAIGSIQQQMMQLSLQ. Disordered regions lie at residues 1041-1131, 1257-1293, 1305-1344, and 1360-1414; these read FVEP…TFHL, LRKQ…RREL, ELCE…KCPA, and LASV…ITST. The segment covering 1080 to 1090 has biased composition (low complexity); it reads SSTPTPTDSPS. Residues 1106–1115 are compositionally biased toward polar residues; sequence DFVQSSVRSE. A coiled-coil region spans residues 1243-1303; it reads AFLLKQQRKA…IKQEYLRKKQ (61 aa). Over residues 1317 to 1328 the composition is skewed to basic residues; that stretch reads PKTKPKKQRLKS. In terms of domain architecture, CKK spans 1421–1555; sequence GPKLFKEPSA…QAKRPAGPKK (135 aa).

Belongs to the CAMSAP1 family.

The protein localises to the cytoplasm. The protein resides in the cytoskeleton. Functionally, key microtubule-organizing protein that specifically binds the minus-end of non-centrosomal microtubules and regulates their dynamics and organization. Specifically recognizes growing microtubule minus-ends and stabilizes microtubules. Acts on free microtubule minus-ends that are not capped by microtubule-nucleating proteins or other factors and protects microtubule minus-ends from depolymerization. In contrast to camsap2 and camsap3, tracks along the growing tips of minus-end microtubules without significantly affecting the polymerization rate: binds at the very tip of the microtubules minus-end and acts as a minus-end tracking protein (-TIP) that dissociates from microtubules after allowing tubulin incorporation. Through interaction with spectrin may regulate neurite outgrowth. The protein is Calmodulin-regulated spectrin-associated protein 1-B (camsap1b) of Danio rerio (Zebrafish).